We begin with the raw amino-acid sequence, 241 residues long: MTALPAASITSSAFDDLDALNAQLEGLHADQRVAWALQHGPQNAALSSSFGAQSAVTLHLLSQQRPDIPVILIDTGYLFPETYRFADALTERLKLNLKVYRPLVSRAWMEARHGRLWEQGMVGIDQYNNLRKVEPMRRALDELEVGTWFTGLRRSQSGGRAQTPIVQKRGERYKISPIADWTDRDVWQYLQAHDLPYHPLWEQGYVSIGDFHTTRRWEPGMREEDTRFFGLKRECGIHEDI.

The Nucleophile; cysteine thiosulfonate intermediate role is filled by Cys235.

Belongs to the PAPS reductase family. CysH subfamily.

The protein localises to the cytoplasm. The enzyme catalyses [thioredoxin]-disulfide + sulfite + adenosine 3',5'-bisphosphate + 2 H(+) = [thioredoxin]-dithiol + 3'-phosphoadenylyl sulfate. It functions in the pathway sulfur metabolism; hydrogen sulfide biosynthesis; sulfite from sulfate: step 3/3. Catalyzes the formation of sulfite from phosphoadenosine 5'-phosphosulfate (PAPS) using thioredoxin as an electron donor. The sequence is that of Phosphoadenosine 5'-phosphosulfate reductase from Xanthomonas euvesicatoria pv. vesicatoria (strain 85-10) (Xanthomonas campestris pv. vesicatoria).